Reading from the N-terminus, the 63-residue chain is Large ribosomal subunit protein uL29 (63 aa).

The protein belongs to the universal ribosomal protein uL29 family.

This is Large ribosomal subunit protein uL29 from Baumannia cicadellinicola subsp. Homalodisca coagulata.